We begin with the raw amino-acid sequence, 181 residues long: MIIAITGTPGVGKSTVSNLLFEKLKSGGKDIACINITEVVSKNGLYLEKDIEMDSYVVDFDKLNKYIQSVGTEDLILDGHVSHYLNPDYIIVLRANPLLIKNRLESRNYSSEKVKENVEAELLDVCLVESIEKNDESKIFEIDCSEKDPEKIVNEILMFLDLKNPEYGNISWLEDYFYLIE.

5 residues coordinate ATP: G10, G12, K13, S14, and T15. The NMP stretch occupies residues 35 to 58 (NITEVVSKNGLYLEKDIEMDSYVV). The segment at 106 to 116 (SRNYSSEKVKE) is LID. The ATP site is built by R107 and K147.

It belongs to the adenylate kinase family. AK6 subfamily. As to quaternary structure, interacts with uS11. Not a structural component of 40S pre-ribosomes, but transiently interacts with them by binding to uS11.

The enzyme catalyses AMP + ATP = 2 ADP. It catalyses the reaction ATP + H2O = ADP + phosphate + H(+). Its function is as follows. Broad-specificity nucleoside monophosphate (NMP) kinase that catalyzes the reversible transfer of the terminal phosphate group between nucleoside triphosphates and monophosphates. Also has ATPase activity. Involved in the late maturation steps of the 30S ribosomal particles, specifically 16S rRNA maturation. While NMP activity is not required for ribosome maturation, ATPase activity is. Associates transiently with small ribosomal subunit protein uS11. ATP hydrolysis breaks the interaction with uS11. May temporarily remove uS11 from the ribosome to enable a conformational change of the ribosomal RNA that is needed for the final maturation step of the small ribosomal subunit. This chain is Putative adenylate kinase, found in Methanococcus maripaludis (strain C7 / ATCC BAA-1331).